A 190-amino-acid polypeptide reads, in one-letter code: Peptidyl-prolyl cis-trans isomerase A (190 aa).

Residues 1–24 (MFKSTLAAMAAVFALSALSPAAMA) form the signal peptide. The region spanning 27–188 (GDPHVLLTTS…KPVVILSAKV (162 aa)) is the PPIase cyclophilin-type domain.

This sequence belongs to the cyclophilin-type PPIase family.

Its subcellular location is the periplasm. It catalyses the reaction [protein]-peptidylproline (omega=180) = [protein]-peptidylproline (omega=0). Functionally, PPIases accelerate the folding of proteins. It catalyzes the cis-trans isomerization of proline imidic peptide bonds in oligopeptides. The sequence is that of Peptidyl-prolyl cis-trans isomerase A (ppiA) from Escherichia coli O157:H7.